Here is a 143-residue protein sequence, read N- to C-terminus: Large ribosomal subunit protein uL15 (143 aa).

Composition is skewed to basic residues over residues 1 to 13 (MIRKSKKITKMRG) and 23 to 38 (KKHRGAGHRGGRGNAG). The disordered stretch occupies residues 1-38 (MIRKSKKITKMRGSRTCGYGEAKKHRGAGHRGGRGNAG).

Belongs to the universal ribosomal protein uL15 family. As to quaternary structure, part of the 50S ribosomal subunit.

In terms of biological role, binds to the 23S rRNA. This chain is Large ribosomal subunit protein uL15, found in Methanococcus maripaludis (strain C5 / ATCC BAA-1333).